Consider the following 284-residue polypeptide: RNase adapter protein RapZ (284 aa).

Residue 8-15 (GRSGSGKS) coordinates ATP. 56–59 (DVRN) lines the GTP pocket. Residues 266–284 (RSRGKNVQSRHRTLEKRKS) are RNA-binding.

Belongs to the RapZ-like family. RapZ subfamily. In terms of assembly, homotrimer.

Modulates the synthesis of GlmS, by affecting the processing and stability of the regulatory small RNA GlmZ. When glucosamine-6-phosphate (GlcN6P) concentrations are high in the cell, RapZ binds GlmZ and targets it to cleavage by RNase E. Consequently, GlmZ is inactivated and unable to activate GlmS synthesis. Under low GlcN6P concentrations, RapZ is sequestered and inactivated by an other regulatory small RNA, GlmY, preventing GlmZ degradation and leading to synthesis of GlmS. The sequence is that of RNase adapter protein RapZ from Cronobacter sakazakii (strain ATCC BAA-894) (Enterobacter sakazakii).